A 395-amino-acid chain; its full sequence is MATEKVFFHVDIDAFFASVEQLDNPEYMGKPVIVGGQSERGVVSTCSYEARKFGVHSAMPILQARKLCPSGIFLRGRMDRYHEKSKEVMSIFKDFTPEIKQISVDEAFLNMTGMEKIFGTPKNSALLLKKTIKEETGLTVSVGCAQNKYIAKIASGRSKPDGLFIVKAGEEIDFMKSLPLKDVWGVGGKTRERLIAAGLTSVPQIFNSSEHLLQSILGNASGSFLFQAVRGELYDVFSDDVKSHSISTERTFEHDLFSHAEIDDVMFYLASELMYRIFDEKVKGKTVSVKIRYNDFTTVSVQSTGAVVNDTQDLFERARELFYKKFDNKTPIRLLGLCIMNIESDIPEAQTELFYSEKNVKKRKIEETMYTLTKKEGKNILKPARLLKKDKDGLE.

The UmuC domain maps to 7–187; that stretch reads FFHVDIDAFF…LPLKDVWGVG (181 aa). 2 residues coordinate Mg(2+): Asp-11 and Asp-105. The active site involves Glu-106.

This sequence belongs to the DNA polymerase type-Y family. As to quaternary structure, monomer. Requires Mg(2+) as cofactor.

It is found in the cytoplasm. The catalysed reaction is DNA(n) + a 2'-deoxyribonucleoside 5'-triphosphate = DNA(n+1) + diphosphate. Poorly processive, error-prone DNA polymerase involved in untargeted mutagenesis. Copies undamaged DNA at stalled replication forks, which arise in vivo from mismatched or misaligned primer ends. These misaligned primers can be extended by PolIV. Exhibits no 3'-5' exonuclease (proofreading) activity. May be involved in translesional synthesis, in conjunction with the beta clamp from PolIII. The protein is DNA polymerase IV of Treponema denticola (strain ATCC 35405 / DSM 14222 / CIP 103919 / JCM 8153 / KCTC 15104).